Consider the following 21-residue polypeptide: Kassinatuerin-1 (21 aa).

Ile21 carries the post-translational modification Isoleucine amide.

In terms of tissue distribution, expressed by the skin dorsal glands.

The protein resides in the secreted. Shows broad-spectrum antimicrobial activity against the Gram-negative bacterium E.coli (MIC=6.25 uM), K.pneumoniae (MIC=25 uM), E.cloacae (MIC=6.25 uM), P.aeruginosa (MIC=25 uM), the Gram-positive bacterium S.aureus (MIC=6.25 uM), S.epidermidis (MIC=6.25 uM), E.faecalis (MIC=12.5 uM), and the fungus C.albicans (MIC=100 uM). Has no antimicrobial effect against P.mirabilis (MIC&gt;100 uM). Has relatively high cytolytic and hemolytic activities. Its alpha-helix has considerable amphipathic character. In Kassina senegalensis (Senegal running frog), this protein is Kassinatuerin-1.